We begin with the raw amino-acid sequence, 581 residues long: Putative ABC transporter ATP-binding protein MM_1996 (581 aa).

Residues 10-250 (IEIRDLWYTY…LEVFHRLGLR (241 aa)) form the ABC transporter 1 domain. 44–51 (GPTGCGKS) contacts ATP. A disordered region spans residues 287–309 (GDYPASPGRKEKTSSPGWSSENN). A compositionally biased stretch (polar residues) spans 300-309 (SSPGWSSENN). The 229-residue stretch at 313 to 541 (VSVRDLWSGY…IDILRKASLT (229 aa)) folds into the ABC transporter 2 domain. 346 to 353 (GTNGSGKS) serves as a coordination point for ATP.

It belongs to the ABC transporter superfamily.

The protein resides in the cell membrane. Its function is as follows. Probably part of an ABC transporter complex. Responsible for energy coupling to the transport system. This chain is Putative ABC transporter ATP-binding protein MM_1996, found in Methanosarcina mazei (strain ATCC BAA-159 / DSM 3647 / Goe1 / Go1 / JCM 11833 / OCM 88) (Methanosarcina frisia).